The following is a 235-amino-acid chain: Serine protease SplA (235 aa).

Positions Met1 to Ala35 are cleaved as a signal peptide. Active-site charge relay system residues include His74, Asp113, and Ser189.

Belongs to the peptidase S1B family.

Its subcellular location is the secreted. This Staphylococcus aureus (strain USA300) protein is Serine protease SplA (splA).